The following is a 223-amino-acid chain: Neurotrophic factor BDNF precursor form (223 aa).

The signal sequence occupies residues 1–5 (SCMKA). A propeptide spanning residues 6–114 (APMKEVSIRG…AANMSMRVRR (109 aa)) is cleaved from the precursor. Asn-107 carries an N-linked (GlcNAc...) asparagine glycan. Intrachain disulfides connect Cys-127–Cys-194 and Cys-172–Cys-223.

Belongs to the NGF-beta family.

The protein localises to the secreted. In terms of biological role, promotes the survival of neuronal populations that are all located either in the central nervous system or directly connected to it. The chain is Neurotrophic factor BDNF precursor form (BDNF) from Chilabothrus striatus (Haitian boa constrictor).